The chain runs to 227 residues: Cytochrome c oxidase subunit 2 (227 aa).

Topologically, residues 1–14 are mitochondrial intermembrane; it reads MAYPFQLGLQDATS. Residues 15–45 traverse the membrane as a helical segment; the sequence is PIMEELLHFHDHTLMIVFLISSLVLYIITLM. Over 46–59 the chain is Mitochondrial matrix; the sequence is LTTKLTHTSTMDAQ. A helical transmembrane segment spans residues 60–87; sequence EVETVWTILPAIILILIALPSLRILYMM. Topologically, residues 88 to 227 are mitochondrial intermembrane; that stretch reads DEINNPSLTV…YFETWSAVMV (140 aa). The Cu cation site is built by His161, Cys196, Glu198, Cys200, His204, and Met207. Residue Glu198 participates in Mg(2+) binding. Tyr218 carries the post-translational modification Phosphotyrosine.

Belongs to the cytochrome c oxidase subunit 2 family. In terms of assembly, component of the cytochrome c oxidase (complex IV, CIV), a multisubunit enzyme composed of 14 subunits. The complex is composed of a catalytic core of 3 subunits MT-CO1, MT-CO2 and MT-CO3, encoded in the mitochondrial DNA, and 11 supernumerary subunits COX4I, COX5A, COX5B, COX6A, COX6B, COX6C, COX7A, COX7B, COX7C, COX8 and NDUFA4, which are encoded in the nuclear genome. The complex exists as a monomer or a dimer and forms supercomplexes (SCs) in the inner mitochondrial membrane with NADH-ubiquinone oxidoreductase (complex I, CI) and ubiquinol-cytochrome c oxidoreductase (cytochrome b-c1 complex, complex III, CIII), resulting in different assemblies (supercomplex SCI(1)III(2)IV(1) and megacomplex MCI(2)III(2)IV(2)). Found in a complex with TMEM177, COA6, COX18, COX20, SCO1 and SCO2. Interacts with TMEM177 in a COX20-dependent manner. Interacts with COX20. Interacts with COX16. It depends on Cu cation as a cofactor.

The protein resides in the mitochondrion inner membrane. It catalyses the reaction 4 Fe(II)-[cytochrome c] + O2 + 8 H(+)(in) = 4 Fe(III)-[cytochrome c] + 2 H2O + 4 H(+)(out). In terms of biological role, component of the cytochrome c oxidase, the last enzyme in the mitochondrial electron transport chain which drives oxidative phosphorylation. The respiratory chain contains 3 multisubunit complexes succinate dehydrogenase (complex II, CII), ubiquinol-cytochrome c oxidoreductase (cytochrome b-c1 complex, complex III, CIII) and cytochrome c oxidase (complex IV, CIV), that cooperate to transfer electrons derived from NADH and succinate to molecular oxygen, creating an electrochemical gradient over the inner membrane that drives transmembrane transport and the ATP synthase. Cytochrome c oxidase is the component of the respiratory chain that catalyzes the reduction of oxygen to water. Electrons originating from reduced cytochrome c in the intermembrane space (IMS) are transferred via the dinuclear copper A center (CU(A)) of subunit 2 and heme A of subunit 1 to the active site in subunit 1, a binuclear center (BNC) formed by heme A3 and copper B (CU(B)). The BNC reduces molecular oxygen to 2 water molecules using 4 electrons from cytochrome c in the IMS and 4 protons from the mitochondrial matrix. The polypeptide is Cytochrome c oxidase subunit 2 (MT-CO2) (Vulpes vulpes (Red fox)).